A 644-amino-acid polypeptide reads, in one-letter code: Exoribonuclease 2 (644 aa).

Residues 189–516 (RQDLTALNFV…NHRLLKAVIK (328 aa)) form the RNB domain. Residues 561–643 (NTRFAAEIID…ETRSIIARPA (83 aa)) form the S1 motif domain.

Belongs to the RNR ribonuclease family. RNase II subfamily.

It is found in the cytoplasm. The enzyme catalyses Exonucleolytic cleavage in the 3'- to 5'-direction to yield nucleoside 5'-phosphates.. Its function is as follows. Involved in mRNA degradation. Hydrolyzes single-stranded polyribonucleotides processively in the 3' to 5' direction. The protein is Exoribonuclease 2 of Salmonella paratyphi B (strain ATCC BAA-1250 / SPB7).